The sequence spans 424 residues: CinA-like protein (424 aa).

It belongs to the CinA family.

This is CinA-like protein from Shewanella baltica (strain OS195).